The chain runs to 146 residues: Large ribosomal subunit protein uL15 (146 aa).

A compositionally biased stretch (basic and acidic residues) spans 1–18 (MKLHELKPTPGSRHERNR). Residues 1 to 69 (MKLHELKPTP…RLPKRGFNNP (69 aa)) form a disordered region. Residues 42–52 (SGGGVRPGFEG) show a composition bias toward gly residues.

It belongs to the universal ribosomal protein uL15 family. Part of the 50S ribosomal subunit.

In terms of biological role, binds to the 23S rRNA. The protein is Large ribosomal subunit protein uL15 of Exiguobacterium sp. (strain ATCC BAA-1283 / AT1b).